We begin with the raw amino-acid sequence, 198 residues long: Small ribosomal subunit protein uS4 (198 aa).

The region spanning 88 to 153 is the S4 RNA-binding domain; sequence LRLDNVMFRM…AQRYKDILEV (66 aa).

The protein belongs to the universal ribosomal protein uS4 family. In terms of assembly, part of the 30S ribosomal subunit. Contacts protein S5. The interaction surface between S4 and S5 is involved in control of translational fidelity.

One of the primary rRNA binding proteins, it binds directly to 16S rRNA where it nucleates assembly of the body of the 30S subunit. In terms of biological role, with S5 and S12 plays an important role in translational accuracy. The sequence is that of Small ribosomal subunit protein uS4 from Lachnoclostridium phytofermentans (strain ATCC 700394 / DSM 18823 / ISDg) (Clostridium phytofermentans).